A 474-amino-acid chain; its full sequence is Microtubule protein alp7 (474 aa).

A compositionally biased stretch (low complexity) spans 1–20 (MSDIVSSSTDYSRRSPSSSS). Disordered regions lie at residues 1–79 (MSDI…DTLN), 93–114 (KSFD…LSQH), and 164–223 (SLQT…NSTQ). At Ser17 the chain carries Phosphoserine. Basic and acidic residues predominate over residues 25 to 36 (ETDHTGFHEKRQ). Over residues 66 to 76 (SKPNPQLNLKD) the composition is skewed to polar residues. 2 stretches are compositionally biased toward polar residues: residues 177–189 (SNGS…NTAP) and 201–223 (RNSA…NSTQ). 2 coiled-coil regions span residues 219–273 (INST…QLRS) and 367–471 (KISN…LNLE).

Interacts with alp14.

Its subcellular location is the nucleus. The protein localises to the cytoplasm. It is found in the cytoskeleton. The protein resides in the spindle. It localises to the chromosome. Its subcellular location is the centromere. The protein localises to the kinetochore. In terms of biological role, required for bipolar spindle formation and proper chromosome segregation. Has an indirect role in connecting the kinetochores and the plus end of pole to chromosome microtubules by targeting alp14 to the spindle pole body. Involved in the emergence of large microtubule organizing centers (MTOC) in interphase cells. Attaches to the minus ends of microtubules and associates with the sites of microtubule attachment on the nuclear envelope. This leads to the stabilization of the microtubule bundles. The protein is Microtubule protein alp7 (alp7) of Schizosaccharomyces pombe (strain 972 / ATCC 24843) (Fission yeast).